We begin with the raw amino-acid sequence, 241 residues long: Prolactin-8A8 (241 aa).

The signal sequence occupies residues 1–30 (MELQFRQPHFSDALLLLLLSNLLLWEKASS). 3 disulfides stabilise this stretch: Cys34-Cys41, Cys101-Cys217, and Cys234-Cys241. An N-linked (GlcNAc...) asparagine glycan is attached at Asn213.

The protein belongs to the somatotropin/prolactin family. In terms of tissue distribution, expressed specifically in the placenta. Predominantly expressed in spongiotrophoblast cells.

It localises to the secreted. The chain is Prolactin-8A8 (Prl8a8) from Mus musculus (Mouse).